The following is a 315-amino-acid chain: Ribosomal RNA small subunit methyltransferase H (315 aa).

Residues 33-35 (GGH), aspartate 52, phenylalanine 84, aspartate 106, and glutamine 113 contribute to the S-adenosyl-L-methionine site.

This sequence belongs to the methyltransferase superfamily. RsmH family.

Its subcellular location is the cytoplasm. It catalyses the reaction cytidine(1402) in 16S rRNA + S-adenosyl-L-methionine = N(4)-methylcytidine(1402) in 16S rRNA + S-adenosyl-L-homocysteine + H(+). Its function is as follows. Specifically methylates the N4 position of cytidine in position 1402 (C1402) of 16S rRNA. In Lactobacillus acidophilus (strain ATCC 700396 / NCK56 / N2 / NCFM), this protein is Ribosomal RNA small subunit methyltransferase H.